Reading from the N-terminus, the 335-residue chain is MSLAPSSYPSLYSSPSLPRTQQTKQNPSLITQSSFISAKSLFLSSNSASLCNTHVAKRRNLALKASETESSAKAEAGGDGEEEEKYETYEIEVEQPYGLKFRKGRDGGTYIDAILPGGSADKTGKFTVGDRVIATSAVFGTEIWPAAEYGRTMYTIRQRIGPLLMQMEKRNGKAEDTGELTEKEIIRAERNAGYISSRLREIQMQNYLKKKEQKAQREKDLREGLQFSKNGKYEEALERFESVLGSKPTPEEASVASYNVACCYSKLNQVQAGLSALEEALKSGYEDFKRIRSDPDLETLRKSKDFDPLLKQFDESFINESAINAIKSLFGFNKK.

The span at 1–18 (MSLAPSSYPSLYSSPSLP) shows a compositional bias: low complexity. 2 disordered regions span residues 1–29 (MSLA…NPSL) and 66–88 (SETE…KYET). The N-terminal 73 residues, 1 to 73 (MSLAPSSYPS…KASETESSAK (73 aa)), are a transit peptide targeting the chloroplast. The span at 19–29 (RTQQTKQNPSL) shows a compositional bias: polar residues. Residues 78-88 (GDGEEEEKYET) show a composition bias toward acidic residues. Positions 97–136 (YGLKFRKGRDGGTYIDAILPGGSADKTGKFTVGDRVIATS) constitute a PDZ domain. 3 TPR repeats span residues 217-250 (REKD…KPTP), 254-287 (SVAS…GYED), and 289-323 (KRIR…ESAI).

Interacts directly with stromal loops of photosystem II (PSII) core components psbB (CP47) and psbC (CP43). Associates with PSII subcomplexes formed during the PSII repair cycle (e.g. PSII dimers, PSII monomers, CP43-less PSII monomerand PSII reaction centers). Phosphorylated rapidly (e.g. within 5 minutes) but transiently at threonine and serine residues after wounding. As to expression, expressed in leaves (at protein level). Mostly expressed in leaves, stems and siliques, and, to a lower extent, in flowers and senescent leaves, but not present in roots (at protein level).

Its subcellular location is the plastid. The protein resides in the chloroplast membrane. It is found in the chloroplast thylakoid membrane. In terms of biological role, involved in photosystem II supercomplex formation and repair, probably acting as a psbB/psbC chaperone on the stromal side of the membrane. In Arabidopsis thaliana (Mouse-ear cress), this protein is Protein MET1, chloroplastic.